The following is a 125-amino-acid chain: Large ribosomal subunit protein bL12 (125 aa).

Belongs to the bacterial ribosomal protein bL12 family. As to quaternary structure, homodimer. Part of the ribosomal stalk of the 50S ribosomal subunit. Forms a multimeric L10(L12)X complex, where L10 forms an elongated spine to which 2 to 4 L12 dimers bind in a sequential fashion. Binds GTP-bound translation factors.

Functionally, forms part of the ribosomal stalk which helps the ribosome interact with GTP-bound translation factors. Is thus essential for accurate translation. The polypeptide is Large ribosomal subunit protein bL12 (Caldanaerobacter subterraneus subsp. tengcongensis (strain DSM 15242 / JCM 11007 / NBRC 100824 / MB4) (Thermoanaerobacter tengcongensis)).